The chain runs to 31 residues: MLTITSYFGFLLAALTITPALLISLNKIQLI.

A helical transmembrane segment spans residues 4–26; sequence ITSYFGFLLAALTITPALLISLN.

Belongs to the PetL family. In terms of assembly, the 4 large subunits of the cytochrome b6-f complex are cytochrome b6, subunit IV (17 kDa polypeptide, PetD), cytochrome f and the Rieske protein, while the 4 small subunits are PetG, PetL, PetM and PetN. The complex functions as a dimer.

It is found in the plastid. Its subcellular location is the chloroplast thylakoid membrane. Its function is as follows. Component of the cytochrome b6-f complex, which mediates electron transfer between photosystem II (PSII) and photosystem I (PSI), cyclic electron flow around PSI, and state transitions. PetL is important for photoautotrophic growth as well as for electron transfer efficiency and stability of the cytochrome b6-f complex. In Dioscorea elephantipes (Elephant's foot yam), this protein is Cytochrome b6-f complex subunit 6.